A 47-amino-acid chain; its full sequence is Large ribosomal subunit protein eL40 (47 aa).

Belongs to the eukaryotic ribosomal protein eL40 family.

The chain is Large ribosomal subunit protein eL40 from Halobacterium salinarum (strain ATCC 29341 / DSM 671 / R1).